The primary structure comprises 282 residues: Protease HtpX homolog (282 aa).

2 helical membrane passes run 6–26 and 29–49; these read TLVL…LIGG and GATF…FFSH. Residue H130 coordinates Zn(2+). E131 is a catalytic residue. Residue H134 participates in Zn(2+) binding. 2 helical membrane-spanning segments follow: residues 140–160 and 180–200; these read ILIS…AQMA and IVAL…QLAI. E205 provides a ligand contact to Zn(2+).

The protein belongs to the peptidase M48B family. Requires Zn(2+) as cofactor.

It is found in the cell inner membrane. This is Protease HtpX homolog from Thermodesulfovibrio yellowstonii (strain ATCC 51303 / DSM 11347 / YP87).